The sequence spans 104 residues: L-rhamnose mutarotase (104 aa).

Tyr-18 is a binding site for substrate. The Proton donor role is filled by His-22. Substrate is bound by residues Tyr-41 and 76–77 (WW).

The protein belongs to the rhamnose mutarotase family. Homodimer.

It is found in the cytoplasm. It catalyses the reaction alpha-L-rhamnose = beta-L-rhamnose. The protein operates within carbohydrate metabolism; L-rhamnose metabolism. Its function is as follows. Involved in the anomeric conversion of L-rhamnose. This Pectobacterium carotovorum subsp. carotovorum (strain PC1) protein is L-rhamnose mutarotase.